The following is a 395-amino-acid chain: Chorismate synthase (395 aa).

The protein belongs to the chorismate synthase family. Homotetramer. FMNH2 serves as cofactor.

It catalyses the reaction 5-O-(1-carboxyvinyl)-3-phosphoshikimate = chorismate + phosphate. It participates in metabolic intermediate biosynthesis; chorismate biosynthesis; chorismate from D-erythrose 4-phosphate and phosphoenolpyruvate: step 7/7. This chain is Chorismate synthase, found in Schizosaccharomyces pombe (strain 972 / ATCC 24843) (Fission yeast).